The primary structure comprises 131 residues: Small ribosomal subunit protein uS8 (131 aa).

It belongs to the universal ribosomal protein uS8 family. Part of the 30S ribosomal subunit. Contacts proteins S5 and S12.

Functionally, one of the primary rRNA binding proteins, it binds directly to 16S rRNA central domain where it helps coordinate assembly of the platform of the 30S subunit. The sequence is that of Small ribosomal subunit protein uS8 from Pelodictyon phaeoclathratiforme (strain DSM 5477 / BU-1).